A 157-amino-acid chain; its full sequence is 2-C-methyl-D-erythritol 2,4-cyclodiphosphate synthase (157 aa).

The a divalent metal cation site is built by aspartate 9 and histidine 11. 4-CDP-2-C-methyl-D-erythritol 2-phosphate is bound by residues 9–11 and 35–36; these read DVH and HS. Residue histidine 43 coordinates a divalent metal cation. 4-CDP-2-C-methyl-D-erythritol 2-phosphate contacts are provided by residues 57–59, 62–66, 101–107, 133–136, phenylalanine 140, and arginine 143; these read DIG, FPDTD, AEKPKMA, and TTTE.

It belongs to the IspF family. Homotrimer. A divalent metal cation serves as cofactor.

The catalysed reaction is 4-CDP-2-C-methyl-D-erythritol 2-phosphate = 2-C-methyl-D-erythritol 2,4-cyclic diphosphate + CMP. The protein operates within isoprenoid biosynthesis; isopentenyl diphosphate biosynthesis via DXP pathway; isopentenyl diphosphate from 1-deoxy-D-xylulose 5-phosphate: step 4/6. Functionally, involved in the biosynthesis of isopentenyl diphosphate (IPP) and dimethylallyl diphosphate (DMAPP), two major building blocks of isoprenoid compounds. Catalyzes the conversion of 4-diphosphocytidyl-2-C-methyl-D-erythritol 2-phosphate (CDP-ME2P) to 2-C-methyl-D-erythritol 2,4-cyclodiphosphate (ME-CPP) with a corresponding release of cytidine 5-monophosphate (CMP). This is 2-C-methyl-D-erythritol 2,4-cyclodiphosphate synthase from Listeria monocytogenes serotype 4b (strain F2365).